Consider the following 388-residue polypeptide: 4-hydroxy-3-methylbut-2-en-1-yl diphosphate synthase (flavodoxin) (388 aa).

[4Fe-4S] cluster is bound by residues C281, C284, C316, and E323.

It belongs to the IspG family. The cofactor is [4Fe-4S] cluster.

The enzyme catalyses (2E)-4-hydroxy-3-methylbut-2-enyl diphosphate + oxidized [flavodoxin] + H2O + 2 H(+) = 2-C-methyl-D-erythritol 2,4-cyclic diphosphate + reduced [flavodoxin]. Its pathway is isoprenoid biosynthesis; isopentenyl diphosphate biosynthesis via DXP pathway; isopentenyl diphosphate from 1-deoxy-D-xylulose 5-phosphate: step 5/6. In terms of biological role, converts 2C-methyl-D-erythritol 2,4-cyclodiphosphate (ME-2,4cPP) into 1-hydroxy-2-methyl-2-(E)-butenyl 4-diphosphate. This is 4-hydroxy-3-methylbut-2-en-1-yl diphosphate synthase (flavodoxin) from Arthrobacter sp. (strain FB24).